A 419-amino-acid chain; its full sequence is Tyrosine--tRNA ligase (419 aa).

An L-tyrosine-binding site is contributed by tyrosine 34. The short motif at 39–48 (PSGDSMHIGH) is the 'HIGH' region element. Tyrosine 168 and glutamine 172 together coordinate L-tyrosine. The short motif at 230–234 (KFGKS) is the 'KMSKS' region element. Position 233 (lysine 233) interacts with ATP. The S4 RNA-binding domain maps to 352–418 (ANLVDWLVTL…GKKKYFLVSY (67 aa)).

The protein belongs to the class-I aminoacyl-tRNA synthetase family. TyrS type 1 subfamily. As to quaternary structure, homodimer.

The protein resides in the cytoplasm. The enzyme catalyses tRNA(Tyr) + L-tyrosine + ATP = L-tyrosyl-tRNA(Tyr) + AMP + diphosphate + H(+). Catalyzes the attachment of tyrosine to tRNA(Tyr) in a two-step reaction: tyrosine is first activated by ATP to form Tyr-AMP and then transferred to the acceptor end of tRNA(Tyr). The protein is Tyrosine--tRNA ligase of Listeria monocytogenes serotype 4b (strain F2365).